A 312-amino-acid chain; its full sequence is Peroxisome biogenesis factor 2 (312 aa).

The Peroxisomal matrix segment spans residues 1-22 (MAGAGGDKPFAKAGPSPLSRVL). Residues 23 to 49 (RISQLDAFELDGALEQLVWSQFTQCFQ) traverse the membrane as a helical segment. Residues 50–55 (HFKPGI) are Cytoplasmic-facing. Residues 56–81 (LTPVEPELKALLQLLLWRFTIYSNSA) traverse the membrane as a helical segment. The Peroxisomal matrix portion of the chain corresponds to 82 to 105 (TVGQSLLNIRYKNALIPGQKYRPM). The chain crosses the membrane as a helical span at residues 106-132 (SRPQKFWFALLTVGEKWFRERSHSLFL). Residues 133–141 (NHPAESNAR) are Cytoplasmic-facing. A helical transmembrane segment spans residues 142-168 (KARKVLSILLGLTKAASLVNFLLFLQR). Residues 169 to 195 (GTFPTLTERLLGVQPVFSRPQGPRDIN) are Peroxisomal matrix-facing. Residues 196–219 (FQYLNRELLWHGFAEFLIFLLPLI) traverse the membrane as a helical segment. The Cytoplasmic portion of the chain corresponds to 220–312 (NVWKLKAGVS…LQVGTELLQS (93 aa)). Positions 252, 255, 267, 269, 272, 275, 288, and 291 each coordinate Zn(2+). The RING-type zinc-finger motif lies at 252-292 (CAICGEWPTMPHSIGCKHVFCYYCVKSNVIADIYFTCPKCG).

This sequence belongs to the pex2/pex10/pex12 family. Component of the PEX2-PEX10-PEX12 retrotranslocation channel.

The protein localises to the peroxisome membrane. The enzyme catalyses [E2 ubiquitin-conjugating enzyme]-S-ubiquitinyl-L-cysteine + [acceptor protein]-L-cysteine = [E2 ubiquitin-conjugating enzyme]-L-cysteine + [acceptor protein]-S-ubiquitinyl-L-cysteine.. The catalysed reaction is S-ubiquitinyl-[E2 ubiquitin-conjugating enzyme]-L-cysteine + [acceptor protein]-L-lysine = [E2 ubiquitin-conjugating enzyme]-L-cysteine + N(6)-ubiquitinyl-[acceptor protein]-L-lysine.. It participates in protein modification; protein ubiquitination. Its function is as follows. E3 ubiquitin-protein ligase component of a retrotranslocation channel required for peroxisome organization by mediating export of the PEX5 receptor from peroxisomes to the cytosol, thereby promoting PEX5 recycling. The retrotranslocation channel is composed of PEX2, PEX10 and PEX12; each subunit contributing transmembrane segments that coassemble into an open channel that specifically allows the passage of PEX5 through the peroxisomal membrane. PEX2 also regulates peroxisome organization by acting as a E3 ubiquitin-protein ligase. The sequence is that of Peroxisome biogenesis factor 2 (pex2) from Danio rerio (Zebrafish).